Consider the following 468-residue polypeptide: Glutamate--tRNA ligase (468 aa).

Positions 10 to 20 (PSPTGDLHIGG) match the 'HIGH' region motif. The Zn(2+) site is built by C99, C101, C126, and D128. The short motif at 236-240 (RLSKR) is the 'KMSKS' region element. An ATP-binding site is contributed by K239.

This sequence belongs to the class-I aminoacyl-tRNA synthetase family. Glutamate--tRNA ligase type 1 subfamily. In terms of assembly, monomer. It depends on Zn(2+) as a cofactor.

It is found in the cytoplasm. The enzyme catalyses tRNA(Glu) + L-glutamate + ATP = L-glutamyl-tRNA(Glu) + AMP + diphosphate. Functionally, catalyzes the attachment of glutamate to tRNA(Glu) in a two-step reaction: glutamate is first activated by ATP to form Glu-AMP and then transferred to the acceptor end of tRNA(Glu). This chain is Glutamate--tRNA ligase, found in Syntrophobacter fumaroxidans (strain DSM 10017 / MPOB).